Reading from the N-terminus, the 339-residue chain is MLELFFEYIFPLIIIALKVVAITIPLILCVAYLTYAERRVIGLMQLRRGPNVVGPFGLLQPIADAVKLLFKEPIIPTNSDKILFILAPMITFILSLIGWAVIPFAKGVVLADINVGVLYILAISSLSVYGIIIAGWASNSKYAFLGAIRSSAQMISYEMSMGLVIITVLLTNGTLNLSGIIEAQRTMPWWIDLMLLPMGVVFFISVLAETNRLPFDLPEAESELVAGYNVEYSSMGFALFFLGEYANMILVSAMTTTFFLGGYLPPFNISWLDCIPGFFWFVFKVGFLLFCFLWIRATLPRYRYDQLMRLGWKVFLPLTLFWVVLVSSVLVYTDNLPSI.

9 helical membrane passes run 9–29 (IFPL…LILC), 50–70 (PNVV…KLLF), 82–102 (ILFI…WAVI), 115–135 (VGVL…IIAG), 161–181 (MGLV…SGII), 187–207 (MPWW…ISVL), 235–255 (MGFA…SAMT), 275–295 (IPGF…FLWI), and 311–331 (GWKV…SVLV).

This sequence belongs to the complex I subunit 1 family. NDH-1 is composed of 14 different subunits. Subunits NuoA, H, J, K, L, M, N constitute the membrane sector of the complex.

The protein resides in the cell inner membrane. The catalysed reaction is a quinone + NADH + 5 H(+)(in) = a quinol + NAD(+) + 4 H(+)(out). Its function is as follows. NDH-1 shuttles electrons from NADH, via FMN and iron-sulfur (Fe-S) centers, to quinones in the respiratory chain. The immediate electron acceptor for the enzyme in this species is believed to be ubiquinone. Couples the redox reaction to proton translocation (for every two electrons transferred, four hydrogen ions are translocated across the cytoplasmic membrane), and thus conserves the redox energy in a proton gradient. This subunit may bind ubiquinone. The chain is NADH-quinone oxidoreductase subunit H from Rickettsia conorii (strain ATCC VR-613 / Malish 7).